Reading from the N-terminus, the 621-residue chain is Type 2 DNA topoisomerase 6 subunit B (621 aa).

Residues N48, D80, 101–102, 111–118, and K435 contribute to the ATP site; these read SR and GQQGIGIS.

It belongs to the TOP6B family. Homodimer. Heterotetramer of two Top6A and two Top6B chains.

It catalyses the reaction ATP-dependent breakage, passage and rejoining of double-stranded DNA.. Its function is as follows. Relaxes both positive and negative superturns and exhibits a strong decatenase activity. The protein is Type 2 DNA topoisomerase 6 subunit B of Methanosarcina mazei (strain ATCC BAA-159 / DSM 3647 / Goe1 / Go1 / JCM 11833 / OCM 88) (Methanosarcina frisia).